The following is a 326-amino-acid chain: uncharacterized protein (326 aa).

This sequence to B.subtilis XkdQ.

This is an uncharacterized protein from Bacillus subtilis (strain 168).